The primary structure comprises 532 residues: Light-independent protochlorophyllide reductase subunit B (532 aa).

Asp-36 is a binding site for [4Fe-4S] cluster. Residue Asp-318 is the Proton donor of the active site. Position 453-454 (453-454 (GM)) interacts with substrate.

Belongs to the ChlB/BchB/BchZ family. Protochlorophyllide reductase is composed of three subunits; ChlL, ChlN and ChlB. Forms a heterotetramer of two ChlB and two ChlN subunits. It depends on [4Fe-4S] cluster as a cofactor.

The protein resides in the plastid. It is found in the chloroplast. It carries out the reaction chlorophyllide a + oxidized 2[4Fe-4S]-[ferredoxin] + 2 ADP + 2 phosphate = protochlorophyllide a + reduced 2[4Fe-4S]-[ferredoxin] + 2 ATP + 2 H2O. It functions in the pathway porphyrin-containing compound metabolism; chlorophyll biosynthesis (light-independent). In terms of biological role, component of the dark-operative protochlorophyllide reductase (DPOR) that uses Mg-ATP and reduced ferredoxin to reduce ring D of protochlorophyllide (Pchlide) to form chlorophyllide a (Chlide). This reaction is light-independent. The NB-protein (ChlN-ChlB) is the catalytic component of the complex. The sequence is that of Light-independent protochlorophyllide reductase subunit B from Tetradesmus obliquus (Green alga).